We begin with the raw amino-acid sequence, 297 residues long: Acetyl-coenzyme A carboxylase carboxyl transferase subunit beta (297 aa).

In terms of domain architecture, CoA carboxyltransferase N-terminal spans 27-296 (LWHKCPSCEA…PEEAREAAAV (270 aa)). Positions 31, 34, 50, and 53 each coordinate Zn(2+). The segment at 31-53 (CPSCEAVLYRPELEKTLDVCPKC) adopts a C4-type zinc-finger fold.

The protein belongs to the AccD/PCCB family. In terms of assembly, acetyl-CoA carboxylase is a heterohexamer composed of biotin carboxyl carrier protein (AccB), biotin carboxylase (AccC) and two subunits each of ACCase subunit alpha (AccA) and ACCase subunit beta (AccD). Requires Zn(2+) as cofactor.

The protein resides in the cytoplasm. It catalyses the reaction N(6)-carboxybiotinyl-L-lysyl-[protein] + acetyl-CoA = N(6)-biotinyl-L-lysyl-[protein] + malonyl-CoA. Its pathway is lipid metabolism; malonyl-CoA biosynthesis; malonyl-CoA from acetyl-CoA: step 1/1. In terms of biological role, component of the acetyl coenzyme A carboxylase (ACC) complex. Biotin carboxylase (BC) catalyzes the carboxylation of biotin on its carrier protein (BCCP) and then the CO(2) group is transferred by the transcarboxylase to acetyl-CoA to form malonyl-CoA. This chain is Acetyl-coenzyme A carboxylase carboxyl transferase subunit beta, found in Pseudomonas putida (strain ATCC 700007 / DSM 6899 / JCM 31910 / BCRC 17059 / LMG 24140 / F1).